Here is a 481-residue protein sequence, read N- to C-terminus: Anti-sigma-I factor RsgI5 (481 aa).

Topologically, residues 1-50 are cytoplasmic; sequence MKHKGIVLKLTKSKAIISTNDFQCYYIKRSPTIYVGKEVEFTNKDIVTKK. One can recognise a RsgI N-terminal anti-sigma domain in the interval 3-50; the sequence is HKGIVLKLTKSKAIISTNDFQCYYIKRSPTIYVGKEVEFTNKDIVTKK. The helical transmembrane segment at 51-71 threads the bilayer; it reads SVLIKPALSVACFILLIACVL. Over 72 to 481 the chain is Extracellular; that stretch reads SLSKIINNIS…DATFIGIKVD (410 aa). The disordered stretch occupies residues 255-339; that stretch reads ASEERNPEES…TPTPTPTPAD (85 aa). Over residues 256–265 the composition is skewed to basic and acidic residues; it reads SEERNPEESP. Low complexity-rich tracts occupy residues 266 to 283 and 291 to 315; these read KMTP…TPTD and NTPT…TSTP. Residues 316 to 336 show a composition bias toward pro residues; sequence APKPTSTPTPTLMPTPTPTPT.

As to quaternary structure, interacts (via RsgI N-terminal anti-sigma domain) with SigI5.

Its subcellular location is the cell membrane. Anti-sigma factor for SigI5. Negatively regulates SigI5 activity through direct interaction. Binding of the polysaccharide substrate to the extracellular C-terminal sensing domain of RsgI5 may induce a conformational change in its N-terminal cytoplasmic region, leading to the release and activation of SigI5. The protein is Anti-sigma-I factor RsgI5 of Acetivibrio thermocellus (strain ATCC 27405 / DSM 1237 / JCM 9322 / NBRC 103400 / NCIMB 10682 / NRRL B-4536 / VPI 7372) (Clostridium thermocellum).